We begin with the raw amino-acid sequence, 33 residues long: Photosystem II reaction center protein Psb30 (33 aa).

A helical membrane pass occupies residues 5–25; the sequence is VIAQLTVLSLIVLSGPLVIIL.

It belongs to the Psb30/Ycf12 family. As to quaternary structure, PSII is composed of 1 copy each of membrane proteins PsbA, PsbB, PsbC, PsbD, PsbE, PsbF, PsbH, PsbI, PsbJ, PsbK, PsbL, PsbM, PsbT, PsbX, PsbY, PsbZ, Psb30/Ycf12, peripheral proteins of the oxygen-evolving complex and a large number of cofactors. It forms dimeric complexes.

The protein resides in the plastid. It is found in the chloroplast thylakoid membrane. Its function is as follows. A core subunit of photosystem II (PSII), probably helps stabilize the reaction center. This chain is Photosystem II reaction center protein Psb30, found in Chlorokybus atmophyticus (Soil alga).